Reading from the N-terminus, the 334-residue chain is Holliday junction branch migration complex subunit RuvB (334 aa).

The segment at 4–184 (ADRLIQPQLQ…FGIPLRLEFY (181 aa)) is large ATPase domain (RuvB-L). ATP is bound by residues Arg24, Gly65, Lys68, Thr69, Thr70, 131–133 (EDY), Arg174, Tyr184, and Arg221. Thr69 provides a ligand contact to Mg(2+). The interval 185–255 (NIKDLSTIVT…VADHALDLLD (71 aa)) is small ATPAse domain (RuvB-S). The tract at residues 258 to 334 (NEGFDYMDRK…YQHFQLIKPE (77 aa)) is head domain (RuvB-H). Arg294, Arg313, and Arg318 together coordinate DNA.

This sequence belongs to the RuvB family. As to quaternary structure, homohexamer. Forms an RuvA(8)-RuvB(12)-Holliday junction (HJ) complex. HJ DNA is sandwiched between 2 RuvA tetramers; dsDNA enters through RuvA and exits via RuvB. An RuvB hexamer assembles on each DNA strand where it exits the tetramer. Each RuvB hexamer is contacted by two RuvA subunits (via domain III) on 2 adjacent RuvB subunits; this complex drives branch migration. In the full resolvosome a probable DNA-RuvA(4)-RuvB(12)-RuvC(2) complex forms which resolves the HJ.

Its subcellular location is the cytoplasm. The enzyme catalyses ATP + H2O = ADP + phosphate + H(+). Functionally, the RuvA-RuvB-RuvC complex processes Holliday junction (HJ) DNA during genetic recombination and DNA repair, while the RuvA-RuvB complex plays an important role in the rescue of blocked DNA replication forks via replication fork reversal (RFR). RuvA specifically binds to HJ cruciform DNA, conferring on it an open structure. The RuvB hexamer acts as an ATP-dependent pump, pulling dsDNA into and through the RuvAB complex. RuvB forms 2 homohexamers on either side of HJ DNA bound by 1 or 2 RuvA tetramers; 4 subunits per hexamer contact DNA at a time. Coordinated motions by a converter formed by DNA-disengaged RuvB subunits stimulates ATP hydrolysis and nucleotide exchange. Immobilization of the converter enables RuvB to convert the ATP-contained energy into a lever motion, pulling 2 nucleotides of DNA out of the RuvA tetramer per ATP hydrolyzed, thus driving DNA branch migration. The RuvB motors rotate together with the DNA substrate, which together with the progressing nucleotide cycle form the mechanistic basis for DNA recombination by continuous HJ branch migration. Branch migration allows RuvC to scan DNA until it finds its consensus sequence, where it cleaves and resolves cruciform DNA. This chain is Holliday junction branch migration complex subunit RuvB, found in Shewanella putrefaciens (strain CN-32 / ATCC BAA-453).